A 227-amino-acid chain; its full sequence is Probable methylthioribulose-1-phosphate dehydratase (227 aa).

C87 is a binding site for substrate. The Zn(2+) site is built by H105 and H107. E129 acts as the Proton donor/acceptor in catalysis. H185 lines the Zn(2+) pocket.

Belongs to the aldolase class II family. MtnB subfamily. Requires Zn(2+) as cofactor.

It localises to the cytoplasm. The enzyme catalyses 5-(methylsulfanyl)-D-ribulose 1-phosphate = 5-methylsulfanyl-2,3-dioxopentyl phosphate + H2O. It functions in the pathway amino-acid biosynthesis; L-methionine biosynthesis via salvage pathway; L-methionine from S-methyl-5-thio-alpha-D-ribose 1-phosphate: step 2/6. In terms of biological role, catalyzes the dehydration of methylthioribulose-1-phosphate (MTRu-1-P) into 2,3-diketo-5-methylthiopentyl-1-phosphate (DK-MTP-1-P). The sequence is that of Probable methylthioribulose-1-phosphate dehydratase from Drosophila erecta (Fruit fly).